Consider the following 498-residue polypeptide: Cytochrome P450 monooxygenase 71 (498 aa).

Residues 7–24 (YVFALLGILATLYFVRWS) form a helical membrane-spanning segment. Asn425 carries N-linked (GlcNAc...) asparagine glycosylation. Position 440 (Cys440) interacts with heme.

This sequence belongs to the cytochrome P450 family. The cofactor is heme.

The protein resides in the membrane. It participates in secondary metabolite biosynthesis. Functionally, cytochrome P450 monooxygenase that is able to use dehydroabietic acid and testosterone as substrates for oxidation, suggesting that the natural substrate(s) may be structurally related to steroid compounds. This is Cytochrome P450 monooxygenase 71 from Postia placenta (strain ATCC 44394 / Madison 698-R) (Brown rot fungus).